Consider the following 115-residue polypeptide: U3-lycotoxin-Ls1o (115 aa).

Residues 1-20 (MKFVLLFGVLLVTLFSYSSA) form the signal peptide. A propeptide spanning residues 21-44 (EMLDDFDQADEDELLSLIEKEEAR) is cleaved from the precursor. Cystine bridges form between cysteine 48-cysteine 63, cysteine 55-cysteine 72, cysteine 62-cysteine 87, and cysteine 74-cysteine 85.

The protein belongs to the neurotoxin 19 (CSTX) family. 01 subfamily. Expressed by the venom gland.

The protein localises to the secreted. In Lycosa singoriensis (Wolf spider), this protein is U3-lycotoxin-Ls1o.